Reading from the N-terminus, the 205-residue chain is ATP phosphoribosyltransferase (205 aa).

Belongs to the ATP phosphoribosyltransferase family. Short subfamily. Heteromultimer composed of HisG and HisZ subunits.

It localises to the cytoplasm. It catalyses the reaction 1-(5-phospho-beta-D-ribosyl)-ATP + diphosphate = 5-phospho-alpha-D-ribose 1-diphosphate + ATP. Its pathway is amino-acid biosynthesis; L-histidine biosynthesis; L-histidine from 5-phospho-alpha-D-ribose 1-diphosphate: step 1/9. Functionally, catalyzes the condensation of ATP and 5-phosphoribose 1-diphosphate to form N'-(5'-phosphoribosyl)-ATP (PR-ATP). Has a crucial role in the pathway because the rate of histidine biosynthesis seems to be controlled primarily by regulation of HisG enzymatic activity. The polypeptide is ATP phosphoribosyltransferase (Vesicomyosocius okutanii subsp. Calyptogena okutanii (strain HA)).